The chain runs to 467 residues: Probable tryptophanase (467 aa).

At Lys-263 the chain carries N6-(pyridoxal phosphate)lysine.

The protein belongs to the beta-eliminating lyase family. Pyridoxal 5'-phosphate is required as a cofactor.

The catalysed reaction is L-tryptophan + H2O = indole + pyruvate + NH4(+). It functions in the pathway amino-acid degradation; L-tryptophan degradation via pyruvate pathway; indole and pyruvate from L-tryptophan: step 1/1. This Aeropyrum pernix (strain ATCC 700893 / DSM 11879 / JCM 9820 / NBRC 100138 / K1) protein is Probable tryptophanase (tnaA).